A 242-amino-acid polypeptide reads, in one-letter code: Probable pectate lyase D (242 aa).

The N-terminal stretch at M1 to A17 is a signal peptide. Residue N216 is glycosylated (N-linked (GlcNAc...) asparagine). The disordered stretch occupies residues D217 to C242.

Belongs to the polysaccharide lyase 3 family. The cofactor is Ca(2+).

It is found in the secreted. The catalysed reaction is Eliminative cleavage of (1-&gt;4)-alpha-D-galacturonan to give oligosaccharides with 4-deoxy-alpha-D-galact-4-enuronosyl groups at their non-reducing ends.. Its function is as follows. Pectinolytic enzyme consist of four classes of enzymes: pectin lyase, polygalacturonase, pectin methylesterase and rhamnogalacturonase. Among pectinolytic enzymes, pectin lyase is the most important in depolymerization of pectin, since it cleaves internal glycosidic bonds of highly methylated pectins. Favors pectate, the anion, over pectin, the methyl ester. This Aspergillus fumigatus (strain CBS 144.89 / FGSC A1163 / CEA10) (Neosartorya fumigata) protein is Probable pectate lyase D (plyD).